The sequence spans 196 residues: uncharacterized protein (196 aa).

CBS domains are found at residues 10–69 and 76–132; these read ARRD…NPDE and MSQP…LVAT. The ACP-type MB domain maps to 153-187; it reads IIEGVCDLCETYSEELRFVDGVWVCPECYEDILGR. Residues C158, C161, C177, and C180 each contribute to the Fe cation site. Residues C158, C161, C177, and C180 each contribute to the Zn(2+) site.

This is an uncharacterized protein from Methanopyrus kandleri (strain AV19 / DSM 6324 / JCM 9639 / NBRC 100938).